Consider the following 227-residue polypeptide: Ubiquitin domain-containing protein 1 (227 aa).

The segment at 1-35 (MGNCVGRQRRERPAAPGHPRKRAGRNEPLKKERLK) is disordered. Over residues 24 to 35 (GRNEPLKKERLK) the composition is skewed to basic and acidic residues. Positions 149–224 (FPLKVRLSTG…IQVIINQPPP (76 aa)) constitute a Ubiquitin-like domain.

In terms of assembly, interacts with UBTD1.

Functionally, may be involved in the regulation of cellular senescence through a positive feedback loop with TP53. Is a TP53 downstream target gene that increases the stability of TP53 protein by promoting the ubiquitination and degradation of MDM2. This Rattus norvegicus (Rat) protein is Ubiquitin domain-containing protein 1 (Ubtd1).